The sequence spans 76 residues: Nemertide alpha-1 (76 aa).

Residues 1 to 28 (YRIASSSIAKMKTAVFLVGLLFLGLVFA) form the signal peptide. Positions 29-44 (DEAAIDSEFDQSIDKR) are excised as a propeptide. 3 disulfide bridges follow: cysteine 46–cysteine 60, cysteine 53–cysteine 64, and cysteine 59–cysteine 70. Residues proline 72 and proline 73 each carry the 4-hydroxyproline modification.

The protein belongs to the nemertide family. In terms of tissue distribution, confined to the epidermis and to the mucus layer.

The protein localises to the secreted. Its function is as follows. Highly potent toxin against insect sodium channel (Nav) and with less potent activity against mammalian sodium channels. Potently inhibits inactivation of insect sodium channels of B.germanica (BgNav1) (EC(50)=8.6 nM), D.melanogaster (Dm Nav1), and arachnid sodium channel V.destructor (VdNav1). Also delays the inactivation of most mammalian Nav channels tested (human Nav1.1/SCN1A; EC(50)=124.1 nM, rat Nav1.2/SCN2A; EC(50)=359.6 nM, rat Nav1.3/SCN3A; EC(50)=135.4 nM, rat Nav1.4/SCN4A; EC(50)=145.5 nM, human Nav1.5/SCN5A; EC(50)=138.3 nM, mouse Nav1.6/SCN8A; EC(50)=240.4 nM, human Nav1.9/SCN9A; EC(50)=76.5 nM). 1 uM is enough to completely inhibits the inactivation, resulting in sustained non-inactivating currents. In addition, the toxin significantly enhances the recovery from inactivation, and the open state is not required for the toxin to interact with the channel. In vivo, injection into green crabs (Carcinus maenas at 1 mug/kg) of small doses (1-5 ug/kg) results in slow and fast permanent paralysis, whereas injection of high doses (more than 10 ug/kg) causes death. Injection into juvenile Blaptica dubia cockroaches results in death or permanent paralysis at doses higher than 7.1 ug/kg. Injection into brine shrimp (Artemia salina) stops movement or causes death after 24 hours (EC(50)=0.3 uM). In the rare inherited cardiac arrhythmia Brugada syndrome 1 (BRGDA1), this toxin is able to restore the loss of function by reducing channel inactivation, without affecting activation, by binding to Nav1.5/SCN5A. In Lineus lacteus (Ribbon worm), this protein is Nemertide alpha-1.